Consider the following 349-residue polypeptide: tRNA pseudouridine synthase D (349 aa).

Phe-27 is a binding site for substrate. Asp-80 (nucleophile) is an active-site residue. Residue Asn-129 coordinates substrate. Positions 155–303 constitute a TRUD domain; the sequence is GVPNYFGAQR…VEAARRAMLL (149 aa). Residue Phe-329 participates in substrate binding.

It belongs to the pseudouridine synthase TruD family.

The enzyme catalyses uridine(13) in tRNA = pseudouridine(13) in tRNA. Responsible for synthesis of pseudouridine from uracil-13 in transfer RNAs. This chain is tRNA pseudouridine synthase D, found in Klebsiella pneumoniae (strain 342).